A 189-amino-acid chain; its full sequence is Large ribosomal subunit protein uL5c (189 aa).

This sequence belongs to the universal ribosomal protein uL5 family. As to quaternary structure, part of the 50S ribosomal subunit; contacts the 5S rRNA.

Its subcellular location is the plastid. The protein localises to the chloroplast. Binds 5S rRNA, forms part of the central protuberance of the 50S subunit. The sequence is that of Large ribosomal subunit protein uL5c (rpl5) from Chara vulgaris (Common stonewort).